We begin with the raw amino-acid sequence, 302 residues long: S-adenosylmethionine sensor upstream of mTORC1 (302 aa).

Residues arginine 73, glycine 132, and aspartate 150 each coordinate S-adenosyl-L-homocysteine. The S-adenosyl-L-methionine site is built by arginine 73, glycine 132, aspartate 150, leucine 151, aspartate 162, phenylalanine 163, and serine 196. Aspartate 162, phenylalanine 163, and serine 196 together coordinate S-adenosyl-L-homocysteine.

The protein belongs to the BMT2/SAMTOR family.

Functionally, S-adenosyl-L-methionine-binding protein. It is unclear whether this protein acts as a sensor of S-adenosyl-L-methionine to signal methionine sufficiency to mTORC1. Probably acts as a S-adenosyl-L-methionine-dependent methyltransferase. The polypeptide is S-adenosylmethionine sensor upstream of mTORC1 (Drosophila melanogaster (Fruit fly)).